A 148-amino-acid polypeptide reads, in one-letter code: Large ribosomal subunit protein bL27m (148 aa).

The transit peptide at 1 to 30 (MAAAALTLRTRAAVTALLSPTAPTALAVRH) directs the protein to the mitochondrion. The interval 28–48 (VRHASKKTGGSSKNLGGKSRG) is disordered.

Belongs to the bacterial ribosomal protein bL27 family. Component of the mitochondrial ribosome large subunit (39S) which comprises a 16S rRNA and about 50 distinct proteins.

The protein localises to the mitochondrion. The polypeptide is Large ribosomal subunit protein bL27m (Mrpl27) (Mus musculus (Mouse)).